The following is a 151-amino-acid chain: Large ribosomal subunit protein bL9 (151 aa).

This sequence belongs to the bacterial ribosomal protein bL9 family.

Functionally, binds to the 23S rRNA. In Lactobacillus helveticus (strain DPC 4571), this protein is Large ribosomal subunit protein bL9.